The chain runs to 89 residues: Elongation factor 1-beta (89 aa).

This sequence belongs to the EF-1-beta/EF-1-delta family.

Its function is as follows. Promotes the exchange of GDP for GTP in EF-1-alpha/GDP, thus allowing the regeneration of EF-1-alpha/GTP that could then be used to form the ternary complex EF-1-alpha/GTP/AAtRNA. The protein is Elongation factor 1-beta of Methanococcus maripaludis (strain DSM 14266 / JCM 13030 / NBRC 101832 / S2 / LL).